Consider the following 263-residue polypeptide: MPTSIKAIKESLEAVTSLLDPLFQELATDARLGVQKALKSRQKAIQTDLAEEERLEAMLSYEKALYKKGYQAIAGIDEVGRGPLAGPVVAACVILPKYCKIKGLNDSKKIPKAKHETIYQAVKEKALAIGIGIIDNQLIDEVNIYEATKLAMLEAIKQLEGQLTQPDYLLIDAMTLDIAISQQSIIKGDANSLSIAAASIVAKVTRDQMMANYDRIFPGYGFAKNAGYGTKEHLQGLKAYGITPIHRKSFEPVKSMCCDSTNP.

The 192-residue stretch at 71–262 (QAIAGIDEVG…VKSMCCDSTN (192 aa)) folds into the RNase H type-2 domain. Residues D77, E78, and D172 each coordinate a divalent metal cation.

This sequence belongs to the RNase HII family. Requires Mn(2+) as cofactor. Mg(2+) is required as a cofactor.

It localises to the cytoplasm. It carries out the reaction Endonucleolytic cleavage to 5'-phosphomonoester.. Endonuclease that specifically degrades the RNA of RNA-DNA hybrids. The sequence is that of Ribonuclease HII from Streptococcus pyogenes serotype M4 (strain MGAS10750).